Here is a 675-residue protein sequence, read N- to C-terminus: Potassium-transporting ATPase ATP-binding subunit 2 (675 aa).

Transmembrane regions (helical) follow at residues 34–54 (IMFVVEVGMVLTLILICFPDI), 65–85 (LITIFIILLITILFANFSEAF), 216–236 (IALFTLLTTLTIIFLVVIVTL), and 245–265 (LILPIAMLIALTVCLIPTTIG). Residue D304 is the 4-aspartylphosphate intermediate of the active site. ATP contacts are provided by residues D341, E345, 372-379 (FTAETRMS), and K390. Positions 513 and 517 each coordinate Mg(2+). 3 consecutive transmembrane segments (helical) span residues 569 to 591 (ALTTFSLANDVAKYFAILPALMM), 611 to 631 (AIISALIFNALIIVALIPIAM), and 644 to 664 (IFINNMLIYGLGGLIVPFLGI).

The protein belongs to the cation transport ATPase (P-type) (TC 3.A.3) family. Type IA subfamily. In terms of assembly, the system is composed of three essential subunits: KdpA, KdpB and KdpC.

It is found in the cell membrane. It carries out the reaction K(+)(out) + ATP + H2O = K(+)(in) + ADP + phosphate + H(+). Functionally, part of the high-affinity ATP-driven potassium transport (or Kdp) system, which catalyzes the hydrolysis of ATP coupled with the electrogenic transport of potassium into the cytoplasm. This subunit is responsible for energy coupling to the transport system and for the release of the potassium ions to the cytoplasm. This chain is Potassium-transporting ATPase ATP-binding subunit 2, found in Staphylococcus aureus (strain Mu50 / ATCC 700699).